We begin with the raw amino-acid sequence, 210 residues long: Imidazole glycerol phosphate synthase subunit HisH (210 aa).

Residues 3 to 210 form the Glutamine amidotransferase type-1 domain; that stretch reads KVALLDYGSG…QLLRNWIDLL (208 aa). Cys-81 acts as the Nucleophile in catalysis. Catalysis depends on residues His-191 and Glu-193.

As to quaternary structure, heterodimer of HisH and HisF.

The protein localises to the cytoplasm. It carries out the reaction 5-[(5-phospho-1-deoxy-D-ribulos-1-ylimino)methylamino]-1-(5-phospho-beta-D-ribosyl)imidazole-4-carboxamide + L-glutamine = D-erythro-1-(imidazol-4-yl)glycerol 3-phosphate + 5-amino-1-(5-phospho-beta-D-ribosyl)imidazole-4-carboxamide + L-glutamate + H(+). The catalysed reaction is L-glutamine + H2O = L-glutamate + NH4(+). It participates in amino-acid biosynthesis; L-histidine biosynthesis; L-histidine from 5-phospho-alpha-D-ribose 1-diphosphate: step 5/9. Its function is as follows. IGPS catalyzes the conversion of PRFAR and glutamine to IGP, AICAR and glutamate. The HisH subunit catalyzes the hydrolysis of glutamine to glutamate and ammonia as part of the synthesis of IGP and AICAR. The resulting ammonia molecule is channeled to the active site of HisF. The chain is Imidazole glycerol phosphate synthase subunit HisH from Corynebacterium diphtheriae (strain ATCC 700971 / NCTC 13129 / Biotype gravis).